A 142-amino-acid chain; its full sequence is 3-hydroxyacyl-[acyl-carrier-protein] dehydratase FabZ (142 aa).

H48 is an active-site residue.

Belongs to the thioester dehydratase family. FabZ subfamily.

The protein resides in the cytoplasm. The enzyme catalyses a (3R)-hydroxyacyl-[ACP] = a (2E)-enoyl-[ACP] + H2O. In terms of biological role, involved in unsaturated fatty acids biosynthesis. Catalyzes the dehydration of short chain beta-hydroxyacyl-ACPs and long chain saturated and unsaturated beta-hydroxyacyl-ACPs. The chain is 3-hydroxyacyl-[acyl-carrier-protein] dehydratase FabZ from Ruminiclostridium cellulolyticum (strain ATCC 35319 / DSM 5812 / JCM 6584 / H10) (Clostridium cellulolyticum).